Consider the following 159-residue polypeptide: Putative ribosomal RNA large subunit methyltransferase H (159 aa).

S-adenosyl-L-methionine-binding positions include leucine 76, glycine 108, and 127-132; that span reads FSKMTF.

Belongs to the RNA methyltransferase RlmH family.

The protein localises to the cytoplasm. The catalysed reaction is pseudouridine(1915) in 23S rRNA + S-adenosyl-L-methionine = N(3)-methylpseudouridine(1915) in 23S rRNA + S-adenosyl-L-homocysteine + H(+). Specifically methylates the pseudouridine at position 1915 (m3Psi1915) in 23S rRNA. This is Putative ribosomal RNA large subunit methyltransferase H from Methanococcus vannielii (strain ATCC 35089 / DSM 1224 / JCM 13029 / OCM 148 / SB).